Here is a 1488-residue protein sequence, read N- to C-terminus: Chromosome partition protein MukB (1488 aa).

34 to 41 (GGNGAGKS) contacts ATP. Coiled coils occupy residues 326–418 (LEAD…QYNQ), 444–472 (LDTF…QTAH), and 509–602 (RHLA…QRAP). The flexible hinge stretch occupies residues 666 to 783 (PGGAEDQRLN…SLPIFGRAAR (118 aa)). 3 coiled-coil regions span residues 835-923 (EAEI…AKLE), 977-1116 (EMLS…AKAG), and 1209-1265 (VEAI…LQSV). A disordered region spans residues 1049–1074 (ADSGAEERARQRRDELHAQLSNNRSR). The segment covering 1051–1065 (SGAEERARQRRDELH) has biased composition (basic and acidic residues).

Belongs to the SMC family. MukB subfamily. In terms of assembly, homodimerization via its hinge domain. Binds to DNA via its C-terminal region. Interacts, and probably forms a ternary complex, with MukE and MukF via its C-terminal region. The complex formation is stimulated by calcium or magnesium. Interacts with tubulin-related protein FtsZ.

It is found in the cytoplasm. The protein localises to the nucleoid. In terms of biological role, plays a central role in chromosome condensation, segregation and cell cycle progression. Functions as a homodimer, which is essential for chromosome partition. Involved in negative DNA supercoiling in vivo, and by this means organize and compact chromosomes. May achieve or facilitate chromosome segregation by condensation DNA from both sides of a centrally located replisome during cell division. In Salmonella paratyphi A (strain ATCC 9150 / SARB42), this protein is Chromosome partition protein MukB.